Reading from the N-terminus, the 642-residue chain is Tigger transposable element derived 5 (642 aa).

A disordered region spans residues 1–54 (MYPASPPAGPALHPVPHRARLPQPRCLAEPPRSPAPGPGSTARPPPPPAPGPRP). The segment covering 31–53 (PRSPAPGPGSTARPPPPPAPGPR) has biased composition (pro residues). Positions 57 to 108 (AVKMTFRKAYSIKDKLQAIERVKGGERQASVCRDFGVPGGTLRGWLKDEPKL) constitute an HTH psq-type domain. 2 consecutive DNA-binding regions (H-T-H motif) follow at residues 84-104 (QASV…WLKD) and 155-188 (PVIQ…WQKR). The HTH CENPB-type domain occupies 122–195 (QRKKMRLANE…QKRHGISSQR (74 aa)). The interval 202-238 (SPVAGPAPVKEEPAQSPGAVLVPDGAPATLPHSEGGY) is disordered. In terms of domain architecture, DDE-1 spans 240–365 (DEQIYNANVT…CLQQKAVLLV (126 aa)). Disordered regions lie at residues 375-400 (TSMP…SPEE) and 548-581 (GCRE…TEQG).

The protein belongs to the tigger transposable element derived protein family.

The protein localises to the nucleus. The polypeptide is Tigger transposable element derived 5 (Tigd5) (Mus musculus (Mouse)).